A 66-amino-acid chain; its full sequence is Large ribosomal subunit protein bL33c (66 aa).

The protein belongs to the bacterial ribosomal protein bL33 family.

It localises to the plastid. It is found in the chloroplast. The chain is Large ribosomal subunit protein bL33c from Jasminum nudiflorum (Winter jasmine).